Consider the following 785-residue polypeptide: Transcription factor Sp1 (785 aa).

Residues 1-93 form a disordered region; sequence MSDQDHSMDE…PSQSGGTGEL (93 aa). Position 2 is an N-acetylserine (serine 2). Residues serine 2 and serine 7 each carry the phosphoserine modification. A repressor domain region spans residues 2 to 82; it reads SDQDHSMDEM…SPNENSNNSQ (81 aa). Residue lysine 16 forms a Glycyl lysine isopeptide (Lys-Gly) (interchain with G-Cter in SUMO); alternate linkage. Lysine 16 participates in a covalent cross-link: Glycyl lysine isopeptide (Lys-Gly) (interchain with G-Cter in SUMO2); alternate. A compositionally biased stretch (gly residues) spans 20–34; that stretch reads GVGGNNGGNGNGGGA. Serine 59 is modified (phosphoserine). Residues 72-85 show a composition bias toward low complexity; it reads ESPNENSNNSQGPS. Serine 101 carries the post-translational modification Phosphoserine; by ATM. Over residues 109–123 the composition is skewed to polar residues; the sequence is IISSSSGATPTSKEQ. The interval 109-141 is disordered; it reads IISSSSGATPTSKEQSGSSTNGSNGSESSKNRT. Positions 124-136 are enriched in low complexity; the sequence is SGSSTNGSNGSES. The segment at 146–251 is transactivation domain A (Gln-rich); that stretch reads QYVVAAAPNL…ANNVLSGQTQ (106 aa). The transactivation domain B (Gln-rich) stretch occupies residues 261–495; it reads NGNITLLPVN…PMQGVSLGQT (235 aa). Position 278 is a phosphothreonine; by MAPK8 (threonine 278). The interval 329–395 is disordered; the sequence is TTTTTSNMGI…KEGEQNQQTQ (67 aa). Residues 342-357 show a composition bias toward low complexity; sequence TTSGSSGTNSQGQTPQ. The span at 358–379 shows a compositional bias: polar residues; the sequence is RVSGLQGSDALNIQQNQTSGGS. Over residues 381–395 the composition is skewed to low complexity; it reads QAGQQKEGEQNQQTQ. At threonine 453 the chain carries Phosphothreonine; by MAPK1 and MAPK3. The short motif at 462 to 470 is the 9aaTAD element; that stretch reads VSWQTLQLQ. Serine 491 carries O-linked (GlcNAc) serine glycosylation. The segment at 496 to 610 is transactivation domain C (highly charged); it reads SSSNTTLTPI…REACTCPYCK (115 aa). The segment at 567 to 598 is disordered; it reads LHGAGGDGIHDDTAGGEEGENSPDAQPQAGRR. Serine 612 is modified (phosphoserine; alternate). Residue serine 612 is glycosylated (O-linked (GlcNAc) serine; alternate). Positions 619 to 785 are VZV IE62-binding; it reads DPGKKKQHIC…QSINISGNGF (167 aa). Residues 626-650 form a C2H2-type 1 zinc finger; the sequence is HICHIQGCGKVYGKTSHLRAHLRWH. Threonine 640 carries the post-translational modification Phosphothreonine; alternate. A glycan (O-linked (GlcNAc) threonine; alternate) is linked at threonine 640. Residue serine 641 is glycosylated (O-linked (GlcNAc) serine; alternate). The residue at position 641 (serine 641) is a Phosphoserine; by PKC/PRKCZ; alternate. Threonine 651 is modified (phosphothreonine; by PKC/PRKCZ). Residues 656 to 680 form a C2H2-type 2 zinc finger; that stretch reads FMCTWSYCGKRFTRSDELQRHKRTH. Threonine 668 is subject to Phosphothreonine. The residue at position 670 (serine 670) is a Phosphoserine; by PKC/PRKCZ. Residue threonine 681 is modified to Phosphothreonine; by PKC/PRKCZ. Residues 686–708 form a C2H2-type 3 zinc finger; that stretch reads FACPECPKRFMRSDHLSKHIKTH. A phosphoserine; alternate mark is found at serine 698 and serine 702. Serine 698 and serine 702 each carry an O-linked (GlcNAc) serine; alternate glycan. Position 703 is an N6-acetyllysine (lysine 703). Residues 708–785 form a domain D region; that stretch reads HQNKKGGPGV…QSINISGNGF (78 aa). Threonine 739 is subject to Phosphothreonine; by MAPK1, MAPK3 and MAPK8.

Belongs to the Sp1 C2H2-type zinc-finger protein family. Interacts with ATF7IP, ATF7IP2, BAHD1, POGZ, HCFC1, AATF and PHC2. Interacts with HLTF; the interaction may be required for basal transcriptional activity of HLTF. Interacts (deacetylated form) with EP300; the interaction enhances gene expression. Interacts with HDAC1 and JUN. Interacts with ELF1; the interaction is inhibited by glycosylation of SP1. Interaction with NFYA; the interaction is inhibited by glycosylation of SP1. Interacts with ATF7IP and TBP. Interacts with MEIS2 isoform 4 and PBX1 isoform PBX1a. Interacts with EGR1. Interacts with SMARCA4/BRG1. Interacts with RNF112 in an oxidative stress-regulated manner. Interacts with ZBTB7A; ZBTB7A prevents the binding to GC-rich motifs in promoters and represses the transcriptional activity of SP1. Interacts with DDX3X; this interaction potentiates SP1-induced CDKN1A/WAF1/CIP1 transcription. Interacts with MSX1; the interaction may inhibit MSX1 autoinactivation. As to quaternary structure, (Microbial infection) Interacts with varicella-zoster virus IE62 protein. In terms of assembly, (Microbial infection) Interacts with SV40 VP2/3 proteins. Interacts with SV40 major capsid protein VP1; this interaction leads to a cooperativity between the 2 proteins in DNA binding. (Microbial infection) Interacts with HIV-1 Vpr; the interaction is inhibited by SP1 O-glycosylation. Phosphorylated on multiple serine and threonine residues. Phosphorylation is coupled to ubiquitination, sumoylation and proteolytic processing. Phosphorylation on Ser-59 enhances proteolytic cleavage. Phosphorylation on Ser-7 enhances ubiquitination and protein degradation. Hyperphosphorylation on Ser-101 in response to DNA damage has no effect on transcriptional activity. MAPK1/MAPK3-mediated phosphorylation on Thr-453 and Thr-739 enhances VEGF transcription but, represses FGF2-triggered PDGFR-alpha transcription. Also implicated in the repression of RECK by ERBB2. Hyperphosphorylated on Thr-278 and Thr-739 during mitosis by MAPK8 shielding SP1 from degradation by the ubiquitin-dependent pathway. Phosphorylated in the zinc-finger domain by calmodulin-activated PKCzeta. Phosphorylation on Ser-641 by PKCzeta is critical for TSA-activated LHR gene expression through release of its repressor, p107. Phosphorylation on Thr-668, Ser-670 and Thr-681 is stimulated by angiotensin II via the AT1 receptor inducing increased binding to the PDGF-D promoter. This phosphorylation is increased in injured artey wall. Ser-59 and Thr-681 can both be dephosphorylated by PP2A during cell-cycle interphase. Dephosphorylation on Ser-59 leads to increased chromatin association during interphase and increases the transcriptional activity. On insulin stimulation, sequentially glycosylated and phosphorylated on several C-terminal serine and threonine residues. Post-translationally, acetylated. Acetylation/deacetylation events affect transcriptional activity. Deacetylation leads to an increase in the expression of the 12(s)-lipooxygenase gene through recruitment of p300 to the promoter. Deacetylated by HDAC6 which leads to increased expression of ENG and positive regulation of angiogenesis. In terms of processing, ubiquitinated. Ubiquitination occurs on the C-terminal proteolytically-cleaved peptide and is triggered by phosphorylation. Sumoylated with SUMO1. Sumoylation modulates proteolytic cleavage of the N-terminal repressor domain. Sumoylation levels are attenuated during tumorigenesis. Phosphorylation mediates SP1 desumoylation. Post-translationally, proteolytic cleavage in the N-terminal repressor domain is prevented by sumoylation. The C-terminal cleaved product is susceptible to degradation. In terms of processing, O-glycosylated; Contains 8 N-acetylglucosamine side chains. Levels are controlled by insulin and the SP1 phosphorylation states. Insulin-mediated O-glycosylation locates SP1 to the nucleus, where it is sequentially deglycosylated and phosphorylated. O-glycosylation affects transcriptional activity through disrupting the interaction with a number of transcription factors including ELF1 and NFYA. Also inhibits interaction with the HIV1 promoter. Inhibited by peroxisomome proliferator receptor gamma (PPARgamma). Up-regulated in adenocarcinomas of the stomach (at protein level). Isoform 3 is ubiquitously expressed at low levels.

Its subcellular location is the nucleus. It is found in the cytoplasm. Its function is as follows. Transcription factor that can activate or repress transcription in response to physiological and pathological stimuli. Binds with high affinity to GC-rich motifs and regulates the expression of a large number of genes involved in a variety of processes such as cell growth, apoptosis, differentiation and immune responses. Highly regulated by post-translational modifications (phosphorylations, sumoylation, proteolytic cleavage, glycosylation and acetylation). Also binds the PDGFR-alpha G-box promoter. May have a role in modulating the cellular response to DNA damage. Implicated in chromatin remodeling. Plays an essential role in the regulation of FE65 gene expression. In complex with ATF7IP, maintains telomerase activity in cancer cells by inducing TERT and TERC gene expression. Isoform 3 is a stronger activator of transcription than isoform 1. Positively regulates the transcription of the core clock component BMAL1. Plays a role in the recruitment of SMARCA4/BRG1 on the c-FOS promoter. Plays a role in protecting cells against oxidative stress following brain injury by regulating the expression of RNF112. The chain is Transcription factor Sp1 (SP1) from Homo sapiens (Human).